Here is a 318-residue protein sequence, read N- to C-terminus: NADH-ubiquinone oxidoreductase chain 1 (318 aa).

Helical transmembrane passes span 5–25 (IISSFLTFVMILIAVAFLTLI), 69–89 (SIFLFILAPALAISLALILWI), 102–122 (LGLMFILAISSLSVYSLLTSG), 148–168 (LGLMIVALTILSGGFDLKLFI), 174–194 (IWLLFPMWPIFLMWFISTLAE), 215–235 (VEFSGGLFALFFLAEYANILF), 253–273 (LYFSASMTMKTMFLIFLFLWV), and 293–313 (FLPITLSLLIFQFSMSLFFGV).

It belongs to the complex I subunit 1 family.

The protein localises to the mitochondrion inner membrane. It carries out the reaction a ubiquinone + NADH + 5 H(+)(in) = a ubiquinol + NAD(+) + 4 H(+)(out). In terms of biological role, core subunit of the mitochondrial membrane respiratory chain NADH dehydrogenase (Complex I) that is believed to belong to the minimal assembly required for catalysis. Complex I functions in the transfer of electrons from NADH to the respiratory chain. The immediate electron acceptor for the enzyme is believed to be ubiquinone. The sequence is that of NADH-ubiquinone oxidoreductase chain 1 (MT-ND1) from Myxine glutinosa (Atlantic hagfish).